The primary structure comprises 337 residues: Phenylalanine--tRNA ligase alpha subunit (337 aa).

E252 is a binding site for Mg(2+).

The protein belongs to the class-II aminoacyl-tRNA synthetase family. Phe-tRNA synthetase alpha subunit type 1 subfamily. In terms of assembly, tetramer of two alpha and two beta subunits. The cofactor is Mg(2+).

The protein localises to the cytoplasm. It carries out the reaction tRNA(Phe) + L-phenylalanine + ATP = L-phenylalanyl-tRNA(Phe) + AMP + diphosphate + H(+). The polypeptide is Phenylalanine--tRNA ligase alpha subunit (Francisella philomiragia subsp. philomiragia (strain ATCC 25017 / CCUG 19701 / FSC 153 / O#319-036)).